Here is a 149-residue protein sequence, read N- to C-terminus: MKVLLLEDVKNLGKAGEVCEVKDGYGNNFLIANQKAKLATNEVINKYKAEVKKKAEKEALEKAQKLQMVETLQTITLTIHKKVGANGSLFGAITKEEITERLKEQHASLNLDKKDIELKHPIKSTGIYEIEVKLGSGIAGVFKIDVVAE.

This sequence belongs to the bacterial ribosomal protein bL9 family.

Binds to the 23S rRNA. The protein is Large ribosomal subunit protein bL9 of Helicobacter pylori (strain J99 / ATCC 700824) (Campylobacter pylori J99).